A 767-amino-acid chain; its full sequence is Dipeptidyl peptidase 4 (767 aa).

Over 1–6 (MKTPWK) the chain is Cytoplasmic. Residues 7–28 (VLLGLLGVAALVTIITVPVVLL) traverse the membrane as a helical; Signal-anchor for type II membrane protein segment. The Extracellular portion of the chain corresponds to 29 to 767 (NKDEAAADSR…HFLQQCFSLR (739 aa)). N-linked (GlcNAc...) asparagine glycans are attached at residues asparagine 83, asparagine 90, asparagine 148, asparagine 217, asparagine 227, and asparagine 319. Cystine bridges form between cysteine 326-cysteine 337, cysteine 383-cysteine 395, cysteine 445-cysteine 448, and cysteine 455-cysteine 473. Asparagine 521 carries an N-linked (GlcNAc...) asparagine glycan. The active-site Charge relay system is serine 631. A disulfide bond links cysteine 650 and cysteine 763. An N-linked (GlcNAc...) asparagine glycan is attached at asparagine 686. Catalysis depends on charge relay system residues aspartate 709 and histidine 741.

This sequence belongs to the peptidase S9B family. DPPIV subfamily. In terms of assembly, monomer. Homodimer. Heterodimer with Seprase (FAP). Requires homodimerization for optimal dipeptidyl peptidase activity and T-cell costimulation. Found in a membrane raft complex, at least composed of BCL10, CARD11, DPP4 and IKBKB. Associates with collagen. Interacts with PTPRC; the interaction is enhanced in an interleukin-12-dependent manner in activated lymphocytes. Interacts (via extracellular domain) with ADA; does not inhibit its dipeptidyl peptidase activity. Interacts with CAV1 (via the N-terminus); the interaction is direct. Interacts (via cytoplasmic tail) with CARD11 (via PDZ domain); its homodimerization is necessary for interaction with CARD11. Interacts with IGF2R; the interaction is direct. Interacts with GPC3. In terms of processing, the soluble form (Dipeptidyl peptidase 4 soluble form also named SDPP) derives from the membrane form (Dipeptidyl peptidase 4 membrane form also named MDPP) by proteolytic processing. Post-translationally, N- and O-Glycosylated. Phosphorylated. Mannose 6-phosphate residues in the carbohydrate moiety are necessary for interaction with IGF2R in activated T-cells. Mannose 6-phosphorylation is induced during T-cell activation. Expressed in bile ducts and other epithelial brush borders (small intestine, kidney, colon, pancreatic duct); acinar structures in salivary glands; endothelial structures and T cell areas in thymus, spleen and lymph node.

Its subcellular location is the secreted. The protein localises to the cell membrane. It localises to the apical cell membrane. The protein resides in the cell projection. It is found in the invadopodium membrane. Its subcellular location is the lamellipodium membrane. The protein localises to the cell junction. It localises to the membrane raft. The enzyme catalyses Release of an N-terminal dipeptide, Xaa-Yaa-|-Zaa-, from a polypeptide, preferentially when Yaa is Pro, provided Zaa is neither Pro nor hydroxyproline.. Inhibited by GPC3 and diprotin A. Cell surface glycoprotein receptor involved in the costimulatory signal essential for T-cell receptor (TCR)-mediated T-cell activation. Acts as a positive regulator of T-cell coactivation, by binding at least ADA, CAV1, IGF2R, and PTPRC. Its binding to CAV1 and CARD11 induces T-cell proliferation and NF-kappa-B activation in a T-cell receptor/CD3-dependent manner. Its interaction with ADA also regulates lymphocyte-epithelial cell adhesion. In association with FAP is involved in the pericellular proteolysis of the extracellular matrix (ECM), the migration and invasion of endothelial cells into the ECM. May be involved in the promotion of lymphatic endothelial cells adhesion, migration and tube formation. When overexpressed, enhanced cell proliferation, a process inhibited by GPC3. Also acts as a serine exopeptidase with a dipeptidyl peptidase activity that regulates various physiological processes by cleaving peptides in the circulation, including many chemokines, mitogenic growth factors, neuropeptides and peptide hormones. Removes N-terminal dipeptides sequentially from polypeptides having unsubstituted N-termini provided that the penultimate residue is proline. In Rattus norvegicus (Rat), this protein is Dipeptidyl peptidase 4 (Dpp4).